Consider the following 447-residue polypeptide: GTPase Der (447 aa).

2 consecutive EngA-type G domains span residues 3 to 167 and 180 to 353; these read PVIA…ALPE and IRLA…KSAN. GTP is bound by residues 9 to 16, 56 to 60, 119 to 122, 186 to 193, 233 to 237, and 298 to 301; these read GRPNVGKS, DTGGF, NKAE, DTAGL, and NKWD. A KH-like domain is found at 354–438; that stretch reads RKMPTPVLTR…PLRIEMKTSS (85 aa).

The protein belongs to the TRAFAC class TrmE-Era-EngA-EngB-Septin-like GTPase superfamily. EngA (Der) GTPase family. Associates with the 50S ribosomal subunit.

Its function is as follows. GTPase that plays an essential role in the late steps of ribosome biogenesis. The polypeptide is GTPase Der (Acidovorax sp. (strain JS42)).